The primary structure comprises 729 residues: Neurochondrin (729 aa).

N-acetylserine is present on serine 2. Serine 2 carries the phosphoserine modification. 2 S-palmitoyl cysteine lipidation sites follow: cysteine 3 and cysteine 4. Arginine 75 bears the Asymmetric dimethylarginine mark. Serine 448 bears the Phosphoserine mark.

The protein belongs to the neurochondrin family. In terms of assembly, interacts with MCHR1. Interacts with SEMA4C. Interacts with DIAPH1 (via FH3 domain). Interacts with GRM5. Palmitoylated. Palmitoylation by ZDHHC1, ZDHHC3 and ZDHHC11 regulates the association of NCDN with endosome membranes. May also be palmitoylated by ZDHHC7. Expressed in the neuronal, chondral and bone tissues. Expressed in dendrites. Enriched in the brain in the surface layer I-IV. In brains, protein level increases in male but decreases in female with advancing age (at protein level). In adult brains, it is highly expressed in the forebrain and hindbrain. Highly expressed in the hippocampus, piriform cortex, septum, amygdaloid complex, medial geniculate nucleus, inferior colliculus, cerebellar nuclei and the nuclei of the Vth, VIIth, and XIIth cranial nerves. In bone tissues, it is expressed in osteoblasts and osteocytes.

The protein localises to the cytoplasm. The protein resides in the cytosol. It is found in the endosome membrane. Its subcellular location is the cell projection. It localises to the dendrite. The protein localises to the postsynapse. In terms of biological role, probably involved in signal transduction, in the nervous system, via increasing cell surface localization of GRM5 and positively regulating its signaling. Required for the spatial learning process. Acts as a negative regulator of Ca(2+)-calmodulin-dependent protein kinase 2 (CaMK2) phosphorylation. May play a role in modulating melanin-concentrating hormone-mediated functions via its interaction with MCHR1 that interferes with G protein-coupled signal transduction. May be involved in bone metabolism. May also be involved in neurite outgrowth. The chain is Neurochondrin (Ncdn) from Mus musculus (Mouse).